Consider the following 101-residue polypeptide: Large ribosomal subunit protein uL24 (101 aa).

It belongs to the universal ribosomal protein uL24 family. Part of the 50S ribosomal subunit.

In terms of biological role, one of two assembly initiator proteins, it binds directly to the 5'-end of the 23S rRNA, where it nucleates assembly of the 50S subunit. Its function is as follows. One of the proteins that surrounds the polypeptide exit tunnel on the outside of the subunit. This chain is Large ribosomal subunit protein uL24, found in Dinoroseobacter shibae (strain DSM 16493 / NCIMB 14021 / DFL 12).